Consider the following 235-residue polypeptide: Rab-like protein 3 (235 aa).

The interval 1–235 (MASLDRVKVL…GGNFKSLHYD (235 aa)) is small GTPase-like. GTP-binding positions include 16–21 (GVGKSS), 148–150 (KLD), and 179–180 (DC).

This sequence belongs to the small GTPase superfamily. Rab family. As to quaternary structure, homodimer.

Its function is as follows. Required for KRAS signaling regulation and modulation of cell proliferation. Regulator of KRAS prenylation, and probably prenylation of other small GTPases. Required for lymphocyte development and function. Not required for myeloid cell development. In Xenopus laevis (African clawed frog), this protein is Rab-like protein 3 (rabl3).